The primary structure comprises 595 residues: Elongation factor 4 (595 aa).

In terms of domain architecture, tr-type G spans 2–184 (KNIRNFSIIA…QIVERIPTPK (183 aa)). Residues 14–19 (DHGKST) and 131–134 (NKID) each bind GTP.

Belongs to the TRAFAC class translation factor GTPase superfamily. Classic translation factor GTPase family. LepA subfamily.

The protein localises to the cell inner membrane. It carries out the reaction GTP + H2O = GDP + phosphate + H(+). Its function is as follows. Required for accurate and efficient protein synthesis under certain stress conditions. May act as a fidelity factor of the translation reaction, by catalyzing a one-codon backward translocation of tRNAs on improperly translocated ribosomes. Back-translocation proceeds from a post-translocation (POST) complex to a pre-translocation (PRE) complex, thus giving elongation factor G a second chance to translocate the tRNAs correctly. Binds to ribosomes in a GTP-dependent manner. The protein is Elongation factor 4 of Vesicomyosocius okutanii subsp. Calyptogena okutanii (strain HA).